The following is a 424-amino-acid chain: MFLLPRFVLVSCIIGSLGFDNPPTNVVSHLNGDWFLFGDSRSDCNHVVTTNPRNYSYMDLNPALCGSGKISSKAGNSIFRSFHFTDFYNYTGEGQQIIFYEGVNFTPYHAFKCTTSGSNDIWMQNKGLFYTQVYKNMAVYRSLTFVNVPYVYNGSAQSTALCKSGSLVLNNPAYIAREANFGDYYYKVEADFYLSGCDEYIVPLCIFNGKFLSNTKYYDDSQYYFNKDTGVIYGLNSTETITTGFDFNCHYLVLPSGNYLAISNELLLTVPTKAICLNKRKDFTPVQVVDSRWNNARQSDNMTAVACQPPYCYFRNSTTNYVGVYDINHGDAGFTSILSGLLYDSPCFSQQGVFRYDNVSSVWPLYPYGRCPTAADINTPDVPICVYDPLPIILLGILLSVAVIIIVVLLLYFMVDNGTRLHDA.

The first 16 residues, 1 to 16, serve as a signal peptide directing secretion; it reads MFLLPRFVLVSCIIGS. The tract at residues 7 to 127 is esterase domain 1; that stretch reads FVLVSCIIGS…SNDIWMQNKG (121 aa). The Virion surface portion of the chain corresponds to 17–392; the sequence is LGFDNPPTNV…PICVYDPLPI (376 aa). Ser-40 (nucleophile) is an active-site residue. Cys-44 and Cys-65 are joined by a disulfide. Asn-54, Asn-89, Asn-153, Asn-236, and Asn-301 each carry an N-linked (GlcNAc...) asparagine; by host glycan. 3 cysteine pairs are disulfide-bonded: Cys-113–Cys-162, Cys-197–Cys-276, and Cys-205–Cys-249. The receptor binding stretch occupies residues 128-266; it reads LFYTQVYKNM…GNYLAISNEL (139 aa). The interval 267-379 is esterase domain 2; that stretch reads LLTVPTKAIC…RCPTAADINT (113 aa). A disulfide bond links Cys-307 and Cys-312. Asn-316 carries N-linked (GlcNAc...) asparagine; by host glycosylation. Residues Asp-326 and His-329 each act as charge relay system in the active site. An intrachain disulfide couples Cys-347 to Cys-371. Asn-358 carries N-linked (GlcNAc...) asparagine; by host glycosylation. A helical membrane pass occupies residues 393-413; sequence ILLGILLSVAVIIIVVLLLYF. The Intravirion portion of the chain corresponds to 414 to 424; the sequence is MVDNGTRLHDA. A glycan (N-linked (GlcNAc...) asparagine; by host) is linked at Asn-417.

The protein belongs to the influenza type C/coronaviruses hemagglutinin-esterase family. Homodimer; disulfide-linked. Forms a complex with the M protein in the pre-Golgi. Associates then with S-M complex to form a ternary complex S-M-HE. In terms of processing, N-glycosylated in the host RER.

The protein resides in the virion membrane. It is found in the host cell membrane. The catalysed reaction is N-acetyl-9-O-acetylneuraminate + H2O = N-acetylneuraminate + acetate + H(+). It carries out the reaction N-acetyl-4-O-acetylneuraminate + H2O = N-acetylneuraminate + acetate + H(+). Functionally, structural protein that makes short spikes at the surface of the virus. Contains receptor binding and receptor-destroying activities. Mediates de-O-acetylation of N-acetyl-4-O-acetylneuraminic acid, which is probably the receptor determinant recognized by the virus on the surface of erythrocytes and susceptible cells. This receptor-destroying activity is important for virus release as it probably helps preventing self-aggregation and ensures the efficient spread of the progeny virus from cell to cell. May serve as a secondary viral attachment protein for initiating infection, the spike protein being the major one. May become a target for both the humoral and the cellular branches of the immune system. The polypeptide is Hemagglutinin-esterase (Bos taurus (Bovine)).